The primary structure comprises 159 residues: Probable cyclic pyranopterin monophosphate synthase accessory protein (159 aa).

Asp128 is an active-site residue.

This sequence belongs to the MoaC family.

It functions in the pathway cofactor biosynthesis; molybdopterin biosynthesis. Together with MoaA, is involved in the conversion of 5'-GTP to cyclic pyranopterin monophosphate (cPMP or molybdopterin precursor Z). The protein is Probable cyclic pyranopterin monophosphate synthase accessory protein of Methanothermobacter thermautotrophicus (strain ATCC 29096 / DSM 1053 / JCM 10044 / NBRC 100330 / Delta H) (Methanobacterium thermoautotrophicum).